Consider the following 285-residue polypeptide: Secreted RxLR effector protein 106 (285 aa).

The signal sequence occupies residues Met1–Ser24. The RxLR-dEER signature appears at Arg42 to Arg54. N-linked (GlcNAc...) asparagine glycosylation is found at Asn182 and Asn187. Residues Ile220 to Gly229 show a composition bias toward basic and acidic residues. The disordered stretch occupies residues Ile220–Leu262. The Bipartite nuclear localization signal signature appears at Arg239–Arg264.

Belongs to the RxLR effector family. In terms of assembly, interacts with host RCD1 and SRO1 transcription co-regulators.

It localises to the secreted. Its subcellular location is the host nucleus. Its function is as follows. Secreted effector that suppresses pathogen-associated molecular pattern (PAMP)-triggered immunity (PTI) in host plants. Binds to RCD1 and SRO1 transcription co-regulators to attenuate transcriptional activation of salicylic acid (SA)-induced defense genes and alters plant growth responses to light. Suppresses SA signal transduction but not SA levels. The sequence is that of Secreted RxLR effector protein 106 from Hyaloperonospora arabidopsidis (strain Emoy2) (Downy mildew agent).